The following is a 168-amino-acid chain: Large ribosomal subunit protein bL9 (168 aa).

A disordered region spans residues 148-168 (ENGEGSVQPAAEAAEVASTEA). Positions 157 to 168 (AAEAAEVASTEA) are enriched in low complexity.

Belongs to the bacterial ribosomal protein bL9 family.

Its function is as follows. Binds to the 23S rRNA. This chain is Large ribosomal subunit protein bL9, found in Herpetosiphon aurantiacus (strain ATCC 23779 / DSM 785 / 114-95).